Here is a 464-residue protein sequence, read N- to C-terminus: L-cystine uptake protein TcyP (464 aa).

10 helical membrane-spanning segments follow: residues 3–23, 34–54, 73–93, 107–127, 184–204, 225–245, 263–283, 347–367, 371–391, and 395–415; these read TLLV…LYYM, VFTA…IYEP, YVKL…ISAF, GLII…GIAA, PTST…FIGV, IVMR…LALM, FVLA…LLIA, AGIY…IDPL, FILT…GVGG, and FAAL…ALVI.

It belongs to the dicarboxylate/amino acid:cation symporter (DAACS) (TC 2.A.23) family.

It localises to the membrane. Functionally, mediates uptake of L-cystine, the oxidized form of L-cysteine. In Bacillus cereus (strain ATCC 14579 / DSM 31 / CCUG 7414 / JCM 2152 / NBRC 15305 / NCIMB 9373 / NCTC 2599 / NRRL B-3711), this protein is L-cystine uptake protein TcyP.